A 162-amino-acid chain; its full sequence is 2-C-methyl-D-erythritol 2,4-cyclodiphosphate synthase (162 aa).

Residues Asp-10 and His-12 each contribute to the a divalent metal cation site. Residues 10-12 (DVH) and 36-37 (HS) contribute to the 4-CDP-2-C-methyl-D-erythritol 2-phosphate site. Residue His-44 participates in a divalent metal cation binding. 4-CDP-2-C-methyl-D-erythritol 2-phosphate contacts are provided by residues 58 to 60 (DIG), 63 to 67 (FSDTD), and Arg-144.

It belongs to the IspF family. In terms of assembly, homotrimer. The cofactor is a divalent metal cation.

The catalysed reaction is 4-CDP-2-C-methyl-D-erythritol 2-phosphate = 2-C-methyl-D-erythritol 2,4-cyclic diphosphate + CMP. It participates in isoprenoid biosynthesis; isopentenyl diphosphate biosynthesis via DXP pathway; isopentenyl diphosphate from 1-deoxy-D-xylulose 5-phosphate: step 4/6. Involved in the biosynthesis of isopentenyl diphosphate (IPP) and dimethylallyl diphosphate (DMAPP), two major building blocks of isoprenoid compounds. Catalyzes the conversion of 4-diphosphocytidyl-2-C-methyl-D-erythritol 2-phosphate (CDP-ME2P) to 2-C-methyl-D-erythritol 2,4-cyclodiphosphate (ME-CPP) with a corresponding release of cytidine 5-monophosphate (CMP). This Burkholderia mallei (strain NCTC 10247) protein is 2-C-methyl-D-erythritol 2,4-cyclodiphosphate synthase.